A 222-amino-acid chain; its full sequence is ATP-dependent dethiobiotin synthetase BioD (222 aa).

ATP is bound at residue 12 to 17; sequence DVGKTF. Position 16 (Thr16) interacts with Mg(2+). Residue Lys37 is part of the active site. A substrate-binding site is contributed by Ser41. ATP is bound by residues Asp54 and 113–116; that span reads EGAG. Mg(2+) is bound by residues Asp54 and Glu113.

This sequence belongs to the dethiobiotin synthetase family. As to quaternary structure, homodimer. Mg(2+) is required as a cofactor.

Its subcellular location is the cytoplasm. It catalyses the reaction (7R,8S)-7,8-diammoniononanoate + CO2 + ATP = (4R,5S)-dethiobiotin + ADP + phosphate + 3 H(+). Its pathway is cofactor biosynthesis; biotin biosynthesis; biotin from 7,8-diaminononanoate: step 1/2. In terms of biological role, catalyzes a mechanistically unusual reaction, the ATP-dependent insertion of CO2 between the N7 and N8 nitrogen atoms of 7,8-diaminopelargonic acid (DAPA, also called 7,8-diammoniononanoate) to form a ureido ring. This chain is ATP-dependent dethiobiotin synthetase BioD, found in Anoxybacillus flavithermus (strain DSM 21510 / WK1).